Here is a 119-residue protein sequence, read N- to C-terminus: Immunoglobulin lambda variable 4-69 (119 aa).

The first 20 residues, 1–20, serve as a signal peptide directing secretion; the sequence is MAWTPLLFLTLLLHCTGSLS. A framework-1 region spans residues 21–45; that stretch reads QLVLTQSPSASASLGASVKLTCTLS. Residues 21–119 enclose the Ig-like domain; it reads QLVLTQSPSA…YYCQTWGTGI (99 aa). C42 and C112 are disulfide-bonded. The tract at residues 46-52 is complementarity-determining-1; the sequence is SGHSSYA. The segment at 53-69 is framework-2; sequence IAWHQQQPEKGPRYLMK. Residues 70-76 form a complementarity-determining-2 region; that stretch reads LNSDGSH. The segment at 73–92 is disordered; the sequence is DGSHSKGDGIPDRFSGSSSG. Residues 77–112 are framework-3; sequence SKGDGIPDRFSGSSSGAERYLTISSLQSEDEADYYC. Positions 113-119 are complementarity-determining-3; sequence QTWGTGI.

In terms of assembly, immunoglobulins are composed of two identical heavy chains and two identical light chains; disulfide-linked.

Its subcellular location is the secreted. The protein resides in the cell membrane. Its function is as follows. V region of the variable domain of immunoglobulin light chains that participates in the antigen recognition. Immunoglobulins, also known as antibodies, are membrane-bound or secreted glycoproteins produced by B lymphocytes. In the recognition phase of humoral immunity, the membrane-bound immunoglobulins serve as receptors which, upon binding of a specific antigen, trigger the clonal expansion and differentiation of B lymphocytes into immunoglobulins-secreting plasma cells. Secreted immunoglobulins mediate the effector phase of humoral immunity, which results in the elimination of bound antigens. The antigen binding site is formed by the variable domain of one heavy chain, together with that of its associated light chain. Thus, each immunoglobulin has two antigen binding sites with remarkable affinity for a particular antigen. The variable domains are assembled by a process called V-(D)-J rearrangement and can then be subjected to somatic hypermutations which, after exposure to antigen and selection, allow affinity maturation for a particular antigen. The protein is Immunoglobulin lambda variable 4-69 of Homo sapiens (Human).